The chain runs to 392 residues: NADH dehydrogenase-like protein YjlD (392 aa).

It belongs to the NADH dehydrogenase family. FAD serves as cofactor.

The polypeptide is NADH dehydrogenase-like protein YjlD (yjlD) (Bacillus subtilis (strain 168)).